Consider the following 336-residue polypeptide: Ornithine carbamoyltransferase, catabolic (336 aa).

Residues serine 62–threonine 65, glutamine 89, arginine 113, and histidine 140–glutamine 143 contribute to the carbamoyl phosphate site. L-ornithine is bound by residues asparagine 172, aspartate 236, and serine 240–methionine 241. Carbamoyl phosphate-binding positions include cysteine 277–leucine 278 and arginine 322.

It belongs to the aspartate/ornithine carbamoyltransferase superfamily. OTCase family.

The protein localises to the cytoplasm. It carries out the reaction carbamoyl phosphate + L-ornithine = L-citrulline + phosphate + H(+). The protein operates within amino-acid degradation; L-arginine degradation via ADI pathway; carbamoyl phosphate from L-arginine: step 2/2. In terms of biological role, reversibly catalyzes the transfer of the carbamoyl group from carbamoyl phosphate (CP) to the N(epsilon) atom of ornithine (ORN) to produce L-citrulline. In Staphylococcus aureus (strain N315), this protein is Ornithine carbamoyltransferase, catabolic (arcB).